A 343-amino-acid chain; its full sequence is MMTLTLAELAKITGGELHGDETVCVSRVAPMDKAGEGDVTFLSNPKYAVHLAECKATVVMLKAEQRKHCSGHVLVVDDPYVAFAKVAQALDTTPKPADGIAPSAVIASDAILGQNVSIGANAVIETGVSLGDNVVIGAGCFIGKNATIGQNTKLWANVTIYHQVQIGADCLIQAGTVIGSDGFGYANDRGEWIKIPQLGSVRIGNRVEIGACTTIDRGALDDTIIEDNVVLDNQLQIAHNVHIGYGTVMPGGTIVAGSTTIGKYCAIGGASVINGHITIADGVNITGMGMVMRSIEEKGVYSSGIPLQTNKQWRKTAARVHRIEEMNKRLKAVEKIVEQKKED.

Histidine 239 functions as the Proton acceptor in the catalytic mechanism.

This sequence belongs to the transferase hexapeptide repeat family. LpxD subfamily. Homotrimer.

It catalyses the reaction a UDP-3-O-[(3R)-3-hydroxyacyl]-alpha-D-glucosamine + a (3R)-hydroxyacyl-[ACP] = a UDP-2-N,3-O-bis[(3R)-3-hydroxyacyl]-alpha-D-glucosamine + holo-[ACP] + H(+). The protein operates within bacterial outer membrane biogenesis; LPS lipid A biosynthesis. In terms of biological role, catalyzes the N-acylation of UDP-3-O-acylglucosamine using 3-hydroxyacyl-ACP as the acyl donor. Is involved in the biosynthesis of lipid A, a phosphorylated glycolipid that anchors the lipopolysaccharide to the outer membrane of the cell. In Vibrio vulnificus (strain YJ016), this protein is UDP-3-O-acylglucosamine N-acyltransferase.